The chain runs to 100 residues: Large ribosomal subunit protein uL23 (100 aa).

It belongs to the universal ribosomal protein uL23 family. In terms of assembly, part of the 50S ribosomal subunit. Contacts protein L29, and trigger factor when it is bound to the ribosome.

Its function is as follows. One of the early assembly proteins it binds 23S rRNA. One of the proteins that surrounds the polypeptide exit tunnel on the outside of the ribosome. Forms the main docking site for trigger factor binding to the ribosome. This is Large ribosomal subunit protein uL23 from Aliivibrio fischeri (strain MJ11) (Vibrio fischeri).